The sequence spans 885 residues: Alanine--tRNA ligase (885 aa).

Histidine 563, histidine 567, cysteine 677, and histidine 681 together coordinate Zn(2+). The segment at 848–868 (LGGKGGGGRPDRAQGGAPSLA) is disordered.

This sequence belongs to the class-II aminoacyl-tRNA synthetase family. Zn(2+) serves as cofactor.

It localises to the cytoplasm. It carries out the reaction tRNA(Ala) + L-alanine + ATP = L-alanyl-tRNA(Ala) + AMP + diphosphate. Functionally, catalyzes the attachment of alanine to tRNA(Ala) in a two-step reaction: alanine is first activated by ATP to form Ala-AMP and then transferred to the acceptor end of tRNA(Ala). Also edits incorrectly charged Ser-tRNA(Ala) and Gly-tRNA(Ala) via its editing domain. The polypeptide is Alanine--tRNA ligase (Paracoccus denitrificans (strain Pd 1222)).